Consider the following 556-residue polypeptide: Beta-caryophyllene synthase TPS9FN (556 aa).

Residues Arg273, Asp310, Asp314, Arg451, and Asp454 each contribute to the (2E,6E)-farnesyl diphosphate site. Mg(2+)-binding residues include Asp310 and Asp314. The DDXXD motif signature appears at 310-314 (DDIYD). The Mg(2+) site is built by Asp454, Ser458, and Glu462.

Belongs to the terpene synthase family. Tpsb subfamily. Mg(2+) is required as a cofactor. Requires Mn(2+) as cofactor. As to expression, expressed in glandular trichomes two to four weeks after flowering onset.

It catalyses the reaction (2E,6E)-farnesyl diphosphate = (-)-(E)-beta-caryophyllene + diphosphate. The catalysed reaction is (2E,6E)-farnesyl diphosphate = alpha-humulene + diphosphate. It participates in secondary metabolite biosynthesis; terpenoid biosynthesis. Functionally, involved in sesquiterpene olefins biosynthesis, constituants of cannabinoids and terpenoids-rich resins. Catalyzes mainly the conversion of (2E)-farnesyl diphosphate to beta-caryophyllene and alpha-humulene. Can also use (2E)-geranyl diphosphate as substrate with low efficiency. This chain is Beta-caryophyllene synthase TPS9FN, found in Cannabis sativa (Hemp).